Reading from the N-terminus, the 87-residue chain is uncharacterized protein (87 aa).

This is an uncharacterized protein from Bacillus subtilis (strain 168).